A 569-amino-acid chain; its full sequence is Mitogen-activated protein kinase 7 (569 aa).

The Protein kinase domain maps to 13–304 (YKIQEIVGKG…AEEALADPYF (292 aa)). Residues 19 to 27 (VGKGSYGVV) and lysine 42 contribute to the ATP site. The active-site Proton acceptor is aspartate 139. Phosphothreonine is present on threonine 175. Positions 175–177 (TDY) match the TXY motif. Tyrosine 177 carries the post-translational modification Phosphotyrosine. The segment at 401-420 (TTVHSTSIPPNEGLDATSQV) is disordered.

It belongs to the protein kinase superfamily. CMGC Ser/Thr protein kinase family. MAP kinase subfamily. Dually phosphorylated on Thr-175 and Tyr-177, which activates the enzyme.

The catalysed reaction is L-seryl-[protein] + ATP = O-phospho-L-seryl-[protein] + ADP + H(+). It carries out the reaction L-threonyl-[protein] + ATP = O-phospho-L-threonyl-[protein] + ADP + H(+). Activated by threonine and tyrosine phosphorylation. The sequence is that of Mitogen-activated protein kinase 7 (MPK7) from Oryza sativa subsp. japonica (Rice).